Here is an 802-residue protein sequence, read N- to C-terminus: Putative transcriptional regulator cudA (802 aa).

4 disordered regions span residues 1–148 (MNQS…PSAI), 154–173 (ISNNSSLNSPSTTSSPNLLL), 381–446 (NNIN…NNEN), and 636–658 (QPQQQQQNQQQGQQPQQQQQQGQ). Residues 25 to 63 (NNNNNGNNGMMMNQQQMQQHVVPHLHHLQQQQQQPQQQQ) are compositionally biased toward low complexity. Over residues 69-88 (DYSNSPNGTTNGSTMSPNCI) the composition is skewed to polar residues. Residues 89-128 (NTNNNNNNNNNNNNNSNNNNNNNNNASNNLTSNKSSSTNT) show a composition bias toward low complexity. Over residues 129-142 (PQIGQLQASPANLT) the composition is skewed to polar residues. The segment covering 381–445 (NNINNNNNIN…CNNNNNNNNE (65 aa)) has biased composition (low complexity).

Expressed in the prestalk cells that constitute the slug tip (pstA cells) and in prespore cells (at protein level). Not expressed in the band of prestalk cells that lies behind the slug tip (pstO cells). Highly expressed in pstO derived papilla cells during culmination.

It localises to the nucleus. It is found in the nucleoplasm. Functionally, essential for normal culmination. May function as a transcriptional regulator. The chain is Putative transcriptional regulator cudA (cudA) from Dictyostelium discoideum (Social amoeba).